The primary structure comprises 183 residues: UPF0114 protein HI_0507 (183 aa).

Transmembrane regions (helical) follow at residues leucine 30 to isoleucine 50, isoleucine 68 to valine 88, and threonine 150 to tyrosine 170.

This sequence belongs to the UPF0114 family.

The protein resides in the cell membrane. This is UPF0114 protein HI_0507 from Haemophilus influenzae (strain ATCC 51907 / DSM 11121 / KW20 / Rd).